We begin with the raw amino-acid sequence, 284 residues long: 8-methylmenaquinol:fumarate reductase membrane anchor subunit (284 aa).

As to quaternary structure, the MFR complex is composed of three subunits: a flavoprotein (SdhA), an iron-sulfur protein (SdhB), and one hydrophobic anchor protein (SdhE).

It is found in the periplasm. It localises to the cell membrane. The enzyme catalyses 8-methylmenaquinone-6 + succinate = 8-methylmenaquinol-6 + fumarate. Functionally, membrane anchor subunit of 8-methylmenaquinol:fumarate reductase (MFR), that catalyzes the reduction of fumarate using 8-methylmenaquinol-6 as electron donor. The complex shows no succinate oxidation activity. Is involved in anaerobic metabolism. SdhE likely contains the quinol/quinone binding site. In Wolinella succinogenes (strain ATCC 29543 / DSM 1740 / CCUG 13145 / JCM 31913 / LMG 7466 / NCTC 11488 / FDC 602W) (Vibrio succinogenes), this protein is 8-methylmenaquinol:fumarate reductase membrane anchor subunit.